Consider the following 68-residue polypeptide: Conotoxin Cal14.13b (68 aa).

The N-terminal stretch at 1 to 20 (MKLCVVIVLLMLAMPFNGGE) is a signal peptide. The propeptide occupies 21–68 (ASRFFNQHARSQRSGMKTRGIWCDPPCPEGETCRGGECSDEFNGDMGR). Met66 is modified (methionine amide).

In terms of processing, contains 2 disulfide bonds. As to expression, expressed by the venom duct.

Its subcellular location is the secreted. In terms of biological role, probable neurotoxin with unknown target. Possibly targets ion channels. This chain is Conotoxin Cal14.13b, found in Californiconus californicus (California cone).